Consider the following 765-residue polypeptide: Putative maltooligosyl trehalose synthase (765 aa).

The protein belongs to the glycosyl hydrolase 13 family. As to quaternary structure, monomer.

It catalyses the reaction 4-[(1-&gt;4)-alpha-D-glucosyl](n-1)-D-glucose = 1-[(1-&gt;4)-alpha-D-glucosyl](n-1)-alpha-D-glucose. In terms of biological role, catalyzes the conversion of maltooligosaccharide into the non-reducing saccharide, maltooligosyl trehalose (alpha-maltooligosyl alpha-D-glucoside) by intramolecular transglycosylation. The polypeptide is Putative maltooligosyl trehalose synthase (treY) (Mycobacterium tuberculosis (strain CDC 1551 / Oshkosh)).